A 236-amino-acid chain; its full sequence is Opacity protein opA50 (236 aa).

A signal peptide is located at residue A1.

It belongs to the opacity porin family.

It is found in the cell outer membrane. Its function is as follows. Implicated in a number of adherence functions. OPA proteins are implicated in pathogenesis and are subject to phase variation. This Neisseria gonorrhoeae protein is Opacity protein opA50 (opaC).